The sequence spans 429 residues: MSSVVVVGTQWGDEGKGKITDFLSEHAEVVARYQGGNNAGHTIVFNGVKYKLHLIPSGIFYKEKICVIGNGMVVDPKALLVELKYLHDRGVSTDNLRISNRAHVILPYHLKQDELEEERKGDNKIGTTKKGIGPAYMDKAARIGIRMADLLDREAFKEKLERNLAEKNRLFEKMYDAEGFNVDEIFEEYYEYGQQIAQYVCDTSVVLNDALDEGRRVLFEGAQGVMLDIDQGTYPFVTSSNPVAGGVTIGSGVGPSKIKRVVGVCKAYTSRVGDGPFPTELHDEIGQQIREVGREYGTTTGRPRRVGWFDSVVVRHARRVSGLTDLSLNSIDVLTGIPTVKICVAYKYNGEVLDEVPANLNILAKCEPVYEELPGWTEDITGVKSLEELPENARHYVERVSQLTGIPLAMFSVGPDRSQTNIVRNVYGI.

GTP is bound by residues 12–18 (GDEGKGK) and 40–42 (GHT). Catalysis depends on D13, which acts as the Proton acceptor. The Mg(2+) site is built by D13 and G40. Residues 13–16 (DEGK), 38–41 (NAGH), T128, R142, Q223, T238, and R302 each bind IMP. The active-site Proton donor is H41. 298–304 (TTTGRPR) is a substrate binding site. GTP-binding positions include R304, 330–332 (SID), and 412–414 (SVG).

This sequence belongs to the adenylosuccinate synthetase family. In terms of assembly, homodimer. Mg(2+) serves as cofactor.

The protein resides in the cytoplasm. It catalyses the reaction IMP + L-aspartate + GTP = N(6)-(1,2-dicarboxyethyl)-AMP + GDP + phosphate + 2 H(+). The protein operates within purine metabolism; AMP biosynthesis via de novo pathway; AMP from IMP: step 1/2. Functionally, plays an important role in the de novo pathway of purine nucleotide biosynthesis. Catalyzes the first committed step in the biosynthesis of AMP from IMP. The protein is Adenylosuccinate synthetase of Bacillus cytotoxicus (strain DSM 22905 / CIP 110041 / 391-98 / NVH 391-98).